Reading from the N-terminus, the 156-residue chain is ATP synthase subunit b (156 aa).

The chain crosses the membrane as a helical span at residues 7-29; that stretch reads LLGQAIAFFFFVTFCMKYVWPPL.

This sequence belongs to the ATPase B chain family. In terms of assembly, F-type ATPases have 2 components, F(1) - the catalytic core - and F(0) - the membrane proton channel. F(1) has five subunits: alpha(3), beta(3), gamma(1), delta(1), epsilon(1). F(0) has three main subunits: a(1), b(2) and c(10-14). The alpha and beta chains form an alternating ring which encloses part of the gamma chain. F(1) is attached to F(0) by a central stalk formed by the gamma and epsilon chains, while a peripheral stalk is formed by the delta and b chains.

The protein localises to the cell inner membrane. In terms of biological role, f(1)F(0) ATP synthase produces ATP from ADP in the presence of a proton or sodium gradient. F-type ATPases consist of two structural domains, F(1) containing the extramembraneous catalytic core and F(0) containing the membrane proton channel, linked together by a central stalk and a peripheral stalk. During catalysis, ATP synthesis in the catalytic domain of F(1) is coupled via a rotary mechanism of the central stalk subunits to proton translocation. Functionally, component of the F(0) channel, it forms part of the peripheral stalk, linking F(1) to F(0). This chain is ATP synthase subunit b, found in Photobacterium profundum (strain SS9).